Consider the following 260-residue polypeptide: Cytochrome c oxidase subunit 3 (260 aa).

The Mitochondrial matrix portion of the chain corresponds to 1–15 (MAHQAHAYHMVDPSP). The chain crosses the membrane as a helical span at residues 16-34 (WPLTGAVAALLLTSGLAMW). Residues 35–40 (FHFGSM) lie on the Mitochondrial intermembrane side of the membrane. Residues 41–66 (ILLTLGLITMVLTMIQWWRDVIREGT) traverse the membrane as a helical segment. The Mitochondrial matrix portion of the chain corresponds to 67–72 (FQGHHT). Residues 73–105 (PPVQKGLRYGMILFITSEVFFFIGFFWAFYNSS) form a helical membrane-spanning segment. Residues 106–128 (LAPTYELGECWPPTGITPLNPFE) are Mitochondrial intermembrane-facing. Residues 129–152 (VPLLNTAVLLASGVTVTWAHHSIM) form a helical membrane-spanning segment. Topologically, residues 153–155 (HGD) are mitochondrial matrix. The chain crosses the membrane as a helical span at residues 156 to 183 (RKEAIQSLTLTILLGLYFTALQAMEYYE). The Mitochondrial intermembrane segment spans residues 184 to 190 (APFTIAD). Residues 191–223 (GVYGSTFFVATGFHGLHVIIGSLFLSVCLLRQI) traverse the membrane as a helical segment. The Mitochondrial matrix segment spans residues 224 to 232 (QYHFTSKHH). Residues 233 to 255 (FGFEAAWYWHFVDVVWLFLYVSI) traverse the membrane as a helical segment. Residues 256 to 260 (YWWGS) are Mitochondrial intermembrane-facing.

Belongs to the cytochrome c oxidase subunit 3 family. As to quaternary structure, component of the cytochrome c oxidase (complex IV, CIV), a multisubunit enzyme composed of 14 subunits. The complex is composed of a catalytic core of 3 subunits MT-CO1, MT-CO2 and MT-CO3, encoded in the mitochondrial DNA, and 11 supernumerary subunits COX4I, COX5A, COX5B, COX6A, COX6B, COX6C, COX7A, COX7B, COX7C, COX8 and NDUFA4, which are encoded in the nuclear genome. The complex exists as a monomer or a dimer and forms supercomplexes (SCs) in the inner mitochondrial membrane with NADH-ubiquinone oxidoreductase (complex I, CI) and ubiquinol-cytochrome c oxidoreductase (cytochrome b-c1 complex, complex III, CIII), resulting in different assemblies (supercomplex SCI(1)III(2)IV(1) and megacomplex MCI(2)III(2)IV(2)).

It is found in the mitochondrion inner membrane. The enzyme catalyses 4 Fe(II)-[cytochrome c] + O2 + 8 H(+)(in) = 4 Fe(III)-[cytochrome c] + 2 H2O + 4 H(+)(out). Functionally, component of the cytochrome c oxidase, the last enzyme in the mitochondrial electron transport chain which drives oxidative phosphorylation. The respiratory chain contains 3 multisubunit complexes succinate dehydrogenase (complex II, CII), ubiquinol-cytochrome c oxidoreductase (cytochrome b-c1 complex, complex III, CIII) and cytochrome c oxidase (complex IV, CIV), that cooperate to transfer electrons derived from NADH and succinate to molecular oxygen, creating an electrochemical gradient over the inner membrane that drives transmembrane transport and the ATP synthase. Cytochrome c oxidase is the component of the respiratory chain that catalyzes the reduction of oxygen to water. Electrons originating from reduced cytochrome c in the intermembrane space (IMS) are transferred via the dinuclear copper A center (CU(A)) of subunit 2 and heme A of subunit 1 to the active site in subunit 1, a binuclear center (BNC) formed by heme A3 and copper B (CU(B)). The BNC reduces molecular oxygen to 2 water molecules using 4 electrons from cytochrome c in the IMS and 4 protons from the mitochondrial matrix. This is Cytochrome c oxidase subunit 3 (mt-co3) from Xenopus laevis (African clawed frog).